A 511-amino-acid chain; its full sequence is Glucans biosynthesis protein G (511 aa).

A signal peptide spans 1–22 (MMKMRWLSAAVMLTLYTSSSWA).

The protein belongs to the OpgD/OpgG family.

The protein localises to the periplasm. It participates in glycan metabolism; osmoregulated periplasmic glucan (OPG) biosynthesis. Involved in the biosynthesis of osmoregulated periplasmic glucans (OPGs). In Shigella flexneri, this protein is Glucans biosynthesis protein G (mdoG).